Reading from the N-terminus, the 141-residue chain is Small ribosomal subunit protein bS6 (141 aa).

Residues 110–141 (SRTKVSDQPAAVEAAEAPAAPAAQEESAPASA) form a disordered region. The segment covering 117–141 (QPAAVEAAEAPAAPAAQEESAPASA) has biased composition (low complexity).

Belongs to the bacterial ribosomal protein bS6 family.

Binds together with bS18 to 16S ribosomal RNA. The sequence is that of Small ribosomal subunit protein bS6 from Acidobacterium capsulatum (strain ATCC 51196 / DSM 11244 / BCRC 80197 / JCM 7670 / NBRC 15755 / NCIMB 13165 / 161).